Reading from the N-terminus, the 530-residue chain is Glutamate--cysteine ligase (530 aa).

It belongs to the glutamate--cysteine ligase type 1 family. Type 1 subfamily.

It catalyses the reaction L-cysteine + L-glutamate + ATP = gamma-L-glutamyl-L-cysteine + ADP + phosphate + H(+). Its pathway is sulfur metabolism; glutathione biosynthesis; glutathione from L-cysteine and L-glutamate: step 1/2. The polypeptide is Glutamate--cysteine ligase (Pseudomonas entomophila (strain L48)).